The sequence spans 407 residues: 1-deoxy-D-xylulose 5-phosphate reductoisomerase (407 aa).

Residues Thr-25, Gly-26, Ser-27, Ile-28, Asn-53, and Asn-136 each contribute to the NADPH site. Residue Lys-137 coordinates 1-deoxy-D-xylulose 5-phosphate. NADPH is bound at residue Glu-138. Residue Asp-162 coordinates Mn(2+). 4 residues coordinate 1-deoxy-D-xylulose 5-phosphate: Ser-163, Glu-164, Ser-188, and His-211. Glu-164 contacts Mn(2+). Gly-217 lines the NADPH pocket. 4 residues coordinate 1-deoxy-D-xylulose 5-phosphate: Ser-224, Asn-229, Lys-230, and Glu-233. Glu-233 lines the Mn(2+) pocket.

It belongs to the DXR family. Mg(2+) serves as cofactor. Mn(2+) is required as a cofactor.

It catalyses the reaction 2-C-methyl-D-erythritol 4-phosphate + NADP(+) = 1-deoxy-D-xylulose 5-phosphate + NADPH + H(+). The protein operates within isoprenoid biosynthesis; isopentenyl diphosphate biosynthesis via DXP pathway; isopentenyl diphosphate from 1-deoxy-D-xylulose 5-phosphate: step 1/6. Catalyzes the NADPH-dependent rearrangement and reduction of 1-deoxy-D-xylulose-5-phosphate (DXP) to 2-C-methyl-D-erythritol 4-phosphate (MEP). This chain is 1-deoxy-D-xylulose 5-phosphate reductoisomerase, found in Rhodopseudomonas palustris (strain BisB18).